Here is a 285-residue protein sequence, read N- to C-terminus: Phosphatidate cytidylyltransferase (285 aa).

The next 8 membrane-spanning stretches (helical) occupy residues 10–30 (FVLI…GFAI), 56–76 (VWLA…LPEY), 93–113 (LGWW…AAIW), 121–141 (LIFG…LRAW), 151–171 (AIWL…AYMF), 190–210 (WQGF…YGMW), 213–233 (LDVA…ASVL), and 264–284 (IDSL…VFRT).

The protein belongs to the CDS family.

The protein resides in the cell inner membrane. The catalysed reaction is a 1,2-diacyl-sn-glycero-3-phosphate + CTP + H(+) = a CDP-1,2-diacyl-sn-glycerol + diphosphate. The protein operates within phospholipid metabolism; CDP-diacylglycerol biosynthesis; CDP-diacylglycerol from sn-glycerol 3-phosphate: step 3/3. The chain is Phosphatidate cytidylyltransferase (cdsA) from Escherichia coli O157:H7.